The sequence spans 1026 residues: uncharacterized protein (1026 aa).

4 WD repeats span residues 14–53 (LLDE…HFTL), 62–104 (HSVS…RRAT), 148–187 (GHED…LTFK), and 937–977 (NAEC…VKFL).

The protein resides in the cytoplasm. It is found in the nucleus. This is an uncharacterized protein from Schizosaccharomyces pombe (strain 972 / ATCC 24843) (Fission yeast).